Consider the following 103-residue polypeptide: Small ribosomal subunit protein uS10 (103 aa).

Belongs to the universal ribosomal protein uS10 family. As to quaternary structure, part of the 30S ribosomal subunit.

Involved in the binding of tRNA to the ribosomes. This chain is Small ribosomal subunit protein uS10, found in Chlorobium chlorochromatii (strain CaD3).